A 375-amino-acid polypeptide reads, in one-letter code: Cinnamyl alcohol dehydrogenase 3 (375 aa).

Residue C44 participates in Zn(2+) binding. Position 46 (S46) interacts with NADP(+). Positions 66, 67, 97, 100, 103, 111, and 160 each coordinate Zn(2+). Residues T164, 186-191 (GLGGLG), 209-214 (SRSSEK), T249, G273, and 296-298 (SQI) each bind NADP(+).

The protein belongs to the zinc-containing alcohol dehydrogenase family. As to quaternary structure, homodimer. Zn(2+) serves as cofactor. In terms of tissue distribution, expressed in the root tips. Expressed in the apical meristematic regions, leaf veins and at the base of the trichomes. Expressed at the base of the stems. Expressed in the abscission zones of newly formed siliques.

The enzyme catalyses (E)-cinnamyl alcohol + NADP(+) = (E)-cinnamaldehyde + NADPH + H(+). It catalyses the reaction (E)-coniferol + NADP(+) = (E)-coniferaldehyde + NADPH + H(+). The catalysed reaction is (E)-sinapyl alcohol + NADP(+) = (E)-sinapaldehyde + NADPH + H(+). It carries out the reaction (E)-4-coumaroyl alcohol + NADP(+) = (E)-4-coumaraldehyde + NADPH + H(+). The enzyme catalyses (E)-caffeyl alcohol + NADP(+) = (E)-caffeyl aldehyde + NADPH + H(+). It functions in the pathway aromatic compound metabolism; phenylpropanoid biosynthesis. In terms of biological role, involved in lignin biosynthesis. Catalyzes the final step specific for the production of lignin monomers. Catalyzes the NADPH-dependent reduction of coniferaldehyde, 5-hydroxyconiferaldehyde, sinapaldehyde, 4-coumaraldehyde and caffeyl aldehyde to their respective alcohols. This chain is Cinnamyl alcohol dehydrogenase 3, found in Arabidopsis thaliana (Mouse-ear cress).